The sequence spans 431 residues: MKSVIIQGLFCGFLAIGLWASMLLLFLHLEQEDMLENEKEELLKKRSLGKNAHQQTRHSEDVTHDEVNFSDPELIQGLRRYGLNAIMSRRLGIEREVPDSRDKICQQKHYPFNLPTASIIICFYNEEFNTLLRAVSSVVNLSPQHLLEEIILVDDMSEFDDLKDKLDYYLEIFRGKVKLIRNKKREGLIRSKMIGASRASGDILVFLDSHCEVNRVWLEPLLHAIAKDHKMVVCPIIDVINELTLDYMAAPIVRGAFDWNLNLRWDNVFAYELDGPEGPSTPIRSPAMTGGIFAINRHYFNELGQYDNGMDICGGENVELSLRIWMCGGQLFILPCSRVGYNSKALSQHRRANQSALSRNLLRVVHVWLDEYKGNFFLQRPSLTYVSCGNISERVELRKRLGCKSFQWYLDNIFPELEPFNTERKRKKNRF.

At 1-4 (MKSV) the chain is on the cytoplasmic side. The chain crosses the membrane as a helical; Signal-anchor for type II membrane protein span at residues 5–27 (IIQGLFCGFLAIGLWASMLLLFL). Over 28-431 (HLEQEDMLEN…TERKRKKNRF (404 aa)) the chain is Lumenal. Asn68 carries an N-linked (GlcNAc...) asparagine glycan. 2 disulfides stabilise this stretch: Cys105–Cys336 and Cys327–Cys403. A catalytic subdomain A region spans residues 114-224 (LPTASIIICF…RVWLEPLLHA (111 aa)). Residues 282-344 (PIRSPAMTGG…PCSRVGYNSK (63 aa)) form a catalytic subdomain B region. Asn353 and Asn390 each carry an N-linked (GlcNAc...) asparagine glycan.

It belongs to the glycosyltransferase 2 family. GalNAc-T subfamily. The cofactor is Mn(2+). In terms of tissue distribution, expressed in testis. Mainly expressed in the round and elongated spermatids during spermiogenesis, not in the outermost cells of the seminiferous tubules, which contain spermatogonia and somatic Sertoli cells. Present in the juxtanuclear space in the round spermatids, not in the acrosomal vesicles. In the elongating spermatids, localizes strongly in the acroplaxome, the region between the developing acrosome and nucleus. During differentiation, also weakly detected in the transient manchette containing microtubules. In epididymal spermatozoa, weakly detected in the midpiece, but concentrates mainly in the neck region around the head-tail coupling apparatus (at protein level).

It localises to the late endosome membrane. Its function is as follows. Probable inactive glycosyltransferase required during spermatid development. May participate in protein loading into the acrosomes and accumulation of ubiquitin-proteasome systems around the head-tail coupling apparatus region. This is Inactive polypeptide N-acetylgalactosaminyltransferase-like protein 5 (Galntl5) from Mus musculus (Mouse).